The sequence spans 422 residues: Testin (422 aa).

A PET domain is found at 92 to 199; sequence MILTSPVAAK…GDVKLPKEVE (108 aa). The interval 135–165 is disordered; sequence QPVAGSEGAQYRKKQLAKQLPAHDQDPSKCH. Basic and acidic residues predominate over residues 155–165; the sequence is PAHDQDPSKCH. LIM zinc-binding domains lie at 234–299, 300–359, and 360–422; these read YYCF…SEKP, RCAG…NHAV, and SCQG…KMSS.

It belongs to the prickle / espinas / testin family. In terms of tissue distribution, expressed in the animal hemisphere at the 4-cell stage. By stage 18, expressed in cells adjacent to the anterior neural plate. In late neurula, expressed in the cranial neural crest. At tail bud stages, expressed strongly in the head, ventral to the developing eye, branchial arches and lateral line placodes. Also localized in the otic vesicle, dorsal fin and notochord with weaker expression at intersomitic junctions of tail bud embryos.

The protein resides in the cytoplasm. It localises to the cell cortex. The protein localises to the cell junction. It is found in the focal adhesion. Functionally, scaffold protein that may play a role in cell adhesion, cell spreading and in the reorganization of the actin cytoskeleton. May inhibit cell growth. Regulates cranial neural crest migration. Acts together with prickle1 to control axial elongation. The polypeptide is Testin (Xenopus laevis (African clawed frog)).